Here is a 425-residue protein sequence, read N- to C-terminus: MVVSGVLTAPAVLTAPHSGTSNTTFVVFENSHVNITAPLPFQHPSAGPLLRYSLETMTSPGFSSLAVNSTAVTPAPAVFKSLNLAVQIILSAIMIFILFVSFLGNLVVCLMVYQKAAMRSAINILLASLAFADMLLAVLNMPFALVTILTTRWIFGKFFCRLSAMFFWLFVIEGVAILLIISIDRFLIIVQRQDKLNPYRAKVLIAVSWATAFSVAFPLAVGNPDLQIPSRAPQCVFGYTTNSGYQAYVILISLISFFIPFLVILYSFMGILNTLRHNALRIHSYPEGICLSQASKLGLMSLQRPFQMSIDMGFKTRAFTTILILFAVFIVCWAPFTTYSLVATFSKHFYYQHNFFEISTWLLWLCYLKSALNPLIYYWRIKKFHDACLDMMPKSFKFLPRLPGHTRRRIRPSAVYVCGEHRTVL.

At 1–87 (MVVSGVLTAP…VFKSLNLAVQ (87 aa)) the chain is on the extracellular side. N-linked (GlcNAc...) asparagine glycosylation is found at asparagine 22, asparagine 34, and asparagine 68. The chain crosses the membrane as a helical span at residues 88 to 112 (IILSAIMIFILFVSFLGNLVVCLMV). Residues 113 to 123 (YQKAAMRSAIN) are Cytoplasmic-facing. Residues 124–148 (ILLASLAFADMLLAVLNMPFALVTI) traverse the membrane as a helical segment. The Extracellular segment spans residues 149–165 (LTTRWIFGKFFCRLSAM). A helical transmembrane segment spans residues 166–190 (FFWLFVIEGVAILLIISIDRFLIIV). The Cytoplasmic portion of the chain corresponds to 191-202 (QRQDKLNPYRAK). A helical membrane pass occupies residues 203–222 (VLIAVSWATAFSVAFPLAVG). Residues 223–247 (NPDLQIPSRAPQCVFGYTTNSGYQA) are Extracellular-facing. The chain crosses the membrane as a helical span at residues 248–272 (YVILISLISFFIPFLVILYSFMGIL). Residues 273-321 (NTLRHNALRIHSYPEGICLSQASKLGLMSLQRPFQMSIDMGFKTRAFTT) are Cytoplasmic-facing. The chain crosses the membrane as a helical span at residues 322–345 (ILILFAVFIVCWAPFTTYSLVATF). The Extracellular portion of the chain corresponds to 346-357 (SKHFYYQHNFFE). Residues 358–379 (ISTWLLWLCYLKSALNPLIYYW) form a helical membrane-spanning segment. Topologically, residues 380 to 425 (RIKKFHDACLDMMPKSFKFLPRLPGHTRRRIRPSAVYVCGEHRTVL) are cytoplasmic.

This sequence belongs to the G-protein coupled receptor 1 family. Brain specific.

Its subcellular location is the cell membrane. In terms of biological role, orphan receptor. May play a role in brain function. This Mus musculus (Mouse) protein is Probable G-protein coupled receptor 63 (Gpr63).